The chain runs to 93 residues: Small ribosomal subunit protein bS16 (93 aa).

The protein belongs to the bacterial ribosomal protein bS16 family.

The polypeptide is Small ribosomal subunit protein bS16 (Roseiflexus castenholzii (strain DSM 13941 / HLO8)).